A 281-amino-acid chain; its full sequence is Nucleotide-binding protein PSHAa2554 (281 aa).

8 to 15 (GRSGSGKS) contacts ATP. Position 56 to 59 (56 to 59 (DVRN)) interacts with GTP.

This sequence belongs to the RapZ-like family.

Displays ATPase and GTPase activities. The polypeptide is Nucleotide-binding protein PSHAa2554 (Pseudoalteromonas translucida (strain TAC 125)).